The primary structure comprises 65 residues: Cell death protein rpr (65 aa).

In terms of assembly, interacts with Diap2 (via BIR2 domain).

In terms of biological role, activator of apoptosis, as well as grim and hid, that acts on the effector Dredd. The protein is Cell death protein rpr (rpr) of Drosophila melanogaster (Fruit fly).